A 232-amino-acid polypeptide reads, in one-letter code: Thiamine import ATP-binding protein ThiQ (232 aa).

One can recognise an ABC transporter domain in the interval 2 to 230 (LKLTDITWLY…KGSASAIWGI (229 aa)). 32–39 (GPSGAGKS) is an ATP binding site.

This sequence belongs to the ABC transporter superfamily. Thiamine importer (TC 3.A.1.19.1) family. In terms of assembly, the complex is composed of two ATP-binding proteins (ThiQ), two transmembrane proteins (ThiP) and a solute-binding protein (ThiB).

The protein localises to the cell inner membrane. It catalyses the reaction thiamine(out) + ATP + H2O = thiamine(in) + ADP + phosphate + H(+). Its function is as follows. Part of the ABC transporter complex ThiBPQ involved in thiamine import. Responsible for energy coupling to the transport system. This Shigella flexneri protein is Thiamine import ATP-binding protein ThiQ.